An 85-amino-acid polypeptide reads, in one-letter code: Protein AC4 (85 aa).

A lipid anchor (N-myristoyl glycine; by host) is attached at Gly-2.

This sequence belongs to the geminiviridae protein AC4/C4 family. Interacts with Arabidopsis thaliana ASK7/ASK-eta and ASK6/ASK-zeta proteins. In terms of processing, phosphorylated by Arabidopsis thaliana ASK7/ASK-eta mainly on threonine and serine residues.

It localises to the host cell membrane. Its function is as follows. Pathogenicity determinant. May act as a suppressor of RNA-mediated gene silencing, also known as post-transcriptional gene silencing (PTGS), a mechanism of plant viral defense that limits the accumulation of viral RNAs. May repress the AL61 promoter. The sequence is that of Protein AC4 from Solanum lycopersicum (Tomato).